The chain runs to 508 residues: Steroid 17-alpha-hydroxylase/17,20 lyase (508 aa).

Position 202 (Asn-202) interacts with substrate. Cys-442 lines the heme pocket.

The protein belongs to the cytochrome P450 family. Heme serves as cofactor.

The protein localises to the endoplasmic reticulum membrane. It is found in the microsome membrane. The enzyme catalyses a C21-steroid + reduced [NADPH--hemoprotein reductase] + O2 = a 17alpha-hydroxy-C21-steroid + oxidized [NADPH--hemoprotein reductase] + H2O + H(+). It carries out the reaction progesterone + reduced [NADPH--hemoprotein reductase] + O2 = 17alpha-hydroxyprogesterone + oxidized [NADPH--hemoprotein reductase] + H2O + H(+). The catalysed reaction is pregnenolone + reduced [NADPH--hemoprotein reductase] + O2 = 17alpha-hydroxypregnenolone + oxidized [NADPH--hemoprotein reductase] + H2O + H(+). It catalyses the reaction 17alpha-hydroxyprogesterone + reduced [NADPH--hemoprotein reductase] + O2 = androst-4-ene-3,17-dione + acetate + oxidized [NADPH--hemoprotein reductase] + H2O + 2 H(+). The enzyme catalyses 17alpha-hydroxyprogesterone + reduced [NADPH--hemoprotein reductase] + O2 = 16alpha,17alpha-dihydroxyprogesterone + oxidized [NADPH--hemoprotein reductase] + H2O + H(+). It carries out the reaction 16alpha,17alpha-dihydroxyprogesterone + reduced [NADPH--hemoprotein reductase] + O2 = 6beta,16alpha,17alpha-trihydroxyprogesterone + oxidized [NADPH--hemoprotein reductase] + H2O + H(+). The catalysed reaction is 17alpha-hydroxypregnenolone + reduced [NADPH--hemoprotein reductase] + O2 = 3beta-hydroxyandrost-5-en-17-one + acetate + oxidized [NADPH--hemoprotein reductase] + H2O + 2 H(+). It catalyses the reaction 16alpha,17alpha-dihydroxypregnenolone + reduced [NADPH--hemoprotein reductase] + O2 = 3beta,16alpha-dihydroxy-androst-5-en-17-one + acetate + oxidized [NADPH--hemoprotein reductase] + H2O + 2 H(+). The enzyme catalyses 3beta-hydroxyandrost-5-en-17-one + reduced [NADPH--hemoprotein reductase] + O2 = 3beta,16alpha-dihydroxy-androst-5-en-17-one + oxidized [NADPH--hemoprotein reductase] + H2O + H(+). It carries out the reaction androst-4-ene-3,17-dione + reduced [NADPH--hemoprotein reductase] + O2 = 16alpha-hydroxyandrost-4-ene-3,17-dione + oxidized [NADPH--hemoprotein reductase] + H2O + H(+). It functions in the pathway steroid hormone biosynthesis. The protein operates within steroid biosynthesis; glucocorticoid biosynthesis. Its activity is regulated as follows. Regulated predominantly by intracellular cAMP levels. The 17,20-lyase activity is stimulated by cytochrome b5, which acts as an allosteric effector increasing the Vmax of the lyase activity. In terms of biological role, a cytochrome P450 monooxygenase involved in corticoid and androgen biosynthesis. Catalyzes 17-alpha hydroxylation of C21 steroids, which is common for both pathways. A second oxidative step, required only for androgen synthesis, involves an acyl-carbon cleavage. The 17-alpha hydroxy intermediates, as part of adrenal glucocorticoids biosynthesis pathway, are precursors of cortisol. Hydroxylates steroid hormones, pregnenolone and progesterone to form 17-alpha hydroxy metabolites, followed by the cleavage of the C17-C20 bond to form C19 steroids, dehydroepiandrosterone (DHEA) and androstenedione. Has 16-alpha hydroxylase activity. Catalyzes 16-alpha hydroxylation of 17-alpha hydroxy pregnenolone, followed by the cleavage of the C17-C20 bond to form 16-alpha-hydroxy DHEA. Also 16-alpha hydroxylates androgens, relevant for estriol synthesis. Mechanistically, uses molecular oxygen inserting one oxygen atom into a substrate, and reducing the second into a water molecule, with two electrons provided by NADPH via cytochrome P450 reductase (CPR; NADPH-ferrihemoprotein reductase). In Pan troglodytes (Chimpanzee), this protein is Steroid 17-alpha-hydroxylase/17,20 lyase (CYP17A1).